Here is a 70-residue protein sequence, read N- to C-terminus: Putative peptide YY-3 (70 aa).

The N-terminal stretch at 1–23 (MVSVCRPWPAVAIALLALLVCLG) is a signal peptide.

Belongs to the NPY family.

The protein localises to the secreted. The polypeptide is Putative peptide YY-3 (PYY3) (Homo sapiens (Human)).